The chain runs to 144 residues: Peptide methionine sulfoxide reductase B7 (144 aa).

The region spanning 19–140 (DEEWRAVLSP…NSVSLKFSSA (122 aa)) is the MsrB domain. Residues cysteine 58, cysteine 61, cysteine 104, and cysteine 107 each contribute to the Zn(2+) site. A disulfide bridge connects residues cysteine 76 and cysteine 129. The Nucleophile role is filled by cysteine 129.

It belongs to the MsrB Met sulfoxide reductase family. Zn(2+) is required as a cofactor.

The protein resides in the cytoplasm. It is found in the cytosol. The catalysed reaction is L-methionyl-[protein] + [thioredoxin]-disulfide + H2O = L-methionyl-(R)-S-oxide-[protein] + [thioredoxin]-dithiol. Its function is as follows. Catalyzes the reduction of methionine sulfoxide (MetSO) to methionine in proteins. Plays a protective role against oxidative stress by restoring activity to proteins that have been inactivated by methionine oxidation. MSRB family specifically reduces the MetSO R-enantiomer. In Arabidopsis thaliana (Mouse-ear cress), this protein is Peptide methionine sulfoxide reductase B7 (MSRB7).